The following is a 122-amino-acid chain: Large ribosomal subunit protein uL14 (122 aa).

Belongs to the universal ribosomal protein uL14 family. Part of the 50S ribosomal subunit. Forms a cluster with proteins L3 and L19. In the 70S ribosome, L14 and L19 interact and together make contacts with the 16S rRNA in bridges B5 and B8.

Functionally, binds to 23S rRNA. Forms part of two intersubunit bridges in the 70S ribosome. The polypeptide is Large ribosomal subunit protein uL14 (Chlamydia muridarum (strain MoPn / Nigg)).